Here is a 409-residue protein sequence, read N- to C-terminus: Probable ferredoxin reductase CtmF (409 aa).

The FAD site is built by Ala15, Asp37, Lys50, Val83, Asp279, and Val298.

The protein belongs to the FAD-dependent oxidoreductase family. FAD is required as a cofactor.

Its pathway is terpene metabolism; monoterpene degradation. In terms of biological role, involved in the degradation of the cyclic monoterpene limonene. Probably part of an electron transfer system involved in the oxidation of limonene to perillyl alcohol. The sequence is that of Probable ferredoxin reductase CtmF from Castellaniella defragrans (strain DSM 12143 / CCUG 39792 / 65Phen) (Alcaligenes defragrans).